The primary structure comprises 157 residues: Transcription elongation factor GreA (157 aa).

Positions 14–37 form a coiled coil; sequence LRKELERLLKRRPLITEAIAEARE.

This sequence belongs to the GreA/GreB family.

Functionally, necessary for efficient RNA polymerase transcription elongation past template-encoded arresting sites. The arresting sites in DNA have the property of trapping a certain fraction of elongating RNA polymerases that pass through, resulting in locked ternary complexes. Cleavage of the nascent transcript by cleavage factors such as GreA or GreB allows the resumption of elongation from the new 3'terminus. GreA releases sequences of 2 to 3 nucleotides. This is Transcription elongation factor GreA from Vibrio vulnificus (strain CMCP6).